The chain runs to 420 residues: Calreticulin (420 aa).

An N-terminal signal peptide occupies residues 1-18 (MKWGVVAVLATLVVAASA). Cys-106 and Cys-140 are oxidised to a cystine. 4 residues coordinate an alpha-D-glucoside: Tyr-110, Lys-112, Tyr-131, and Asp-138. Tandem repeats lie at residues 194–205 (VASGSLYEDWDM), 213–224 (DPKASKPEDWDE), 230–241 (DPEDKKPEGWDD), 248–259 (DKDAKKPEDWDD), 263–273 (GTWEPPMIPNP), 277–287 (GEWKAKMIKNP), and 291–301 (GIWVAPDIDNP). Residues 194–259 (VASGSLYEDW…DAKKPEDWDD (66 aa)) are 4 X approximate repeats. The span at 210–220 (TIKDPKASKPE) shows a compositional bias: basic and acidic residues. A disordered region spans residues 210–272 (TIKDPKASKP…GTWEPPMIPN (63 aa)). Residues 221–230 (DWDEREEIAD) show a composition bias toward acidic residues. Residues 263–301 (GTWEPPMIPNPEYKGEWKAKMIKNPAYKGIWVAPDIDNP) are 3 X approximate repeats. An alpha-D-glucoside is bound at residue Glu-321. The segment covering 357-376 (EEKAMFDKVKKEEDEKKAKD) has biased composition (basic and acidic residues). A disordered region spans residues 357–420 (EEKAMFDKVK…EEEESGHDEL (64 aa)). Acidic residues-rich tracts occupy residues 385 to 398 (EAAE…EDKE) and 411 to 420 (EEEESGHDEL). The short motif at 417-420 (HDEL) is the Prevents secretion from ER element.

Belongs to the calreticulin family.

Its subcellular location is the endoplasmic reticulum lumen. Molecular calcium-binding chaperone promoting folding, oligomeric assembly and quality control in the ER via the calreticulin/calnexin cycle. This lectin may interact transiently with almost all of the monoglucosylated glycoproteins that are synthesized in the ER. This Chlamydomonas reinhardtii (Chlamydomonas smithii) protein is Calreticulin.